The sequence spans 172 residues: 3-hydroxydecanoyl-[acyl-carrier-protein] dehydratase (172 aa).

The active site involves H71.

Belongs to the thioester dehydratase family. FabA subfamily. In terms of assembly, homodimer.

The protein localises to the cytoplasm. The enzyme catalyses a (3R)-hydroxyacyl-[ACP] = a (2E)-enoyl-[ACP] + H2O. It catalyses the reaction (3R)-hydroxydecanoyl-[ACP] = (2E)-decenoyl-[ACP] + H2O. The catalysed reaction is (2E)-decenoyl-[ACP] = (3Z)-decenoyl-[ACP]. Its pathway is lipid metabolism; fatty acid biosynthesis. Its function is as follows. Necessary for the introduction of cis unsaturation into fatty acids. Catalyzes the dehydration of (3R)-3-hydroxydecanoyl-ACP to E-(2)-decenoyl-ACP and then its isomerization to Z-(3)-decenoyl-ACP. Can catalyze the dehydratase reaction for beta-hydroxyacyl-ACPs with saturated chain lengths up to 16:0, being most active on intermediate chain length. The chain is 3-hydroxydecanoyl-[acyl-carrier-protein] dehydratase from Blochmanniella pennsylvanica (strain BPEN).